A 96-amino-acid polypeptide reads, in one-letter code: Small ribosomal subunit protein bS6 (96 aa).

Belongs to the bacterial ribosomal protein bS6 family.

Its function is as follows. Binds together with bS18 to 16S ribosomal RNA. In Salinispora tropica (strain ATCC BAA-916 / DSM 44818 / JCM 13857 / NBRC 105044 / CNB-440), this protein is Small ribosomal subunit protein bS6.